The following is a 149-amino-acid chain: MKYQQLENLECGWKWQYLINKWKDGETITKYIDSSEADHAVSELRKLEHEPTKVLEWIDLHMAEELDKKLKQAIRAKRKRHFNAEQIHTKKKSIDLDYRVWEKLSTRANELGCTLSDAIEYLLSEASRSEKASAAVSTLKEDLSKLLSD.

Belongs to the MatP family. As to quaternary structure, homodimer.

The protein localises to the cytoplasm. Its function is as follows. Required for spatial organization of the terminus region of the chromosome (Ter macrodomain) during the cell cycle. Prevents early segregation of duplicated Ter macrodomains during cell division. Binds specifically to matS, which is a 13 bp signature motif repeated within the Ter macrodomain. This chain is Macrodomain Ter protein, found in Vibrio vulnificus (strain YJ016).